Reading from the N-terminus, the 504-residue chain is Histidine ammonia-lyase (504 aa).

The segment at residues 142–144 (ASG) is a cross-link (5-imidazolinone (Ala-Gly)). At serine 143 the chain carries 2,3-didehydroalanine (Ser).

This sequence belongs to the PAL/histidase family. Contains an active site 4-methylidene-imidazol-5-one (MIO), which is formed autocatalytically by cyclization and dehydration of residues Ala-Ser-Gly.

Its subcellular location is the cytoplasm. The catalysed reaction is L-histidine = trans-urocanate + NH4(+). It participates in amino-acid degradation; L-histidine degradation into L-glutamate; N-formimidoyl-L-glutamate from L-histidine: step 1/3. The polypeptide is Histidine ammonia-lyase (Staphylococcus aureus (strain JH1)).